Reading from the N-terminus, the 644-residue chain is Exoribonuclease 2 (644 aa).

An RNB domain is found at 189 to 516 (RQDLTALNFV…NHRLLKAAIK (328 aa)). The region spanning 561–643 (DTRFAAEIID…ETRSIIARPV (83 aa)) is the S1 motif domain.

This sequence belongs to the RNR ribonuclease family. RNase II subfamily.

The protein localises to the cytoplasm. It carries out the reaction Exonucleolytic cleavage in the 3'- to 5'-direction to yield nucleoside 5'-phosphates.. Functionally, involved in mRNA degradation. Hydrolyzes single-stranded polyribonucleotides processively in the 3' to 5' direction. This is Exoribonuclease 2 from Escherichia fergusonii (strain ATCC 35469 / DSM 13698 / CCUG 18766 / IAM 14443 / JCM 21226 / LMG 7866 / NBRC 102419 / NCTC 12128 / CDC 0568-73).